We begin with the raw amino-acid sequence, 481 residues long: Adenosylhomocysteinase (481 aa).

The substrate site is built by T65, D140, and E200. T201–T203 provides a ligand contact to NAD(+). Residues K230 and D234 each coordinate substrate. NAD(+) is bound by residues N235, G264–G269, E287, N322, I343–H345, and N393.

It belongs to the adenosylhomocysteinase family. Requires NAD(+) as cofactor.

It localises to the cytoplasm. The catalysed reaction is S-adenosyl-L-homocysteine + H2O = L-homocysteine + adenosine. Its pathway is amino-acid biosynthesis; L-homocysteine biosynthesis; L-homocysteine from S-adenosyl-L-homocysteine: step 1/1. Its function is as follows. May play a key role in the regulation of the intracellular concentration of adenosylhomocysteine. The polypeptide is Adenosylhomocysteinase (Polynucleobacter asymbioticus (strain DSM 18221 / CIP 109841 / QLW-P1DMWA-1) (Polynucleobacter necessarius subsp. asymbioticus)).